The chain runs to 578 residues: Sulfite reductase [NADPH] hemoprotein beta-component (578 aa).

Residues 1–21 form a disordered region; it reads MTNTLAGPDRSRDISQPLEKL. Residues C443, C449, C488, and C492 each coordinate [4Fe-4S] cluster. C492 is a binding site for siroheme.

The protein belongs to the nitrite and sulfite reductase 4Fe-4S domain family. In terms of assembly, alpha(8)-beta(8). The alpha component is a flavoprotein, the beta component is a hemoprotein. Siroheme serves as cofactor. Requires [4Fe-4S] cluster as cofactor.

It carries out the reaction hydrogen sulfide + 3 NADP(+) + 3 H2O = sulfite + 3 NADPH + 4 H(+). It participates in sulfur metabolism; hydrogen sulfide biosynthesis; hydrogen sulfide from sulfite (NADPH route): step 1/1. Its function is as follows. Component of the sulfite reductase complex that catalyzes the 6-electron reduction of sulfite to sulfide. This is one of several activities required for the biosynthesis of L-cysteine from sulfate. This is Sulfite reductase [NADPH] hemoprotein beta-component from Methylocella silvestris (strain DSM 15510 / CIP 108128 / LMG 27833 / NCIMB 13906 / BL2).